The following is a 157-amino-acid chain: 6,7-dimethyl-8-ribityllumazine synthase (157 aa).

5-amino-6-(D-ribitylamino)uracil is bound by residues Phe22, 57–59, and 81–83; these read AYE and TVI. Position 86-87 (86-87) interacts with (2S)-2-hydroxy-3-oxobutyl phosphate; the sequence is GT. His89 (proton donor) is an active-site residue. Phe114 is a binding site for 5-amino-6-(D-ribitylamino)uracil. Residue Arg128 coordinates (2S)-2-hydroxy-3-oxobutyl phosphate.

Belongs to the DMRL synthase family. In terms of assembly, forms an icosahedral capsid composed of 60 subunits, arranged as a dodecamer of pentamers.

The enzyme catalyses (2S)-2-hydroxy-3-oxobutyl phosphate + 5-amino-6-(D-ribitylamino)uracil = 6,7-dimethyl-8-(1-D-ribityl)lumazine + phosphate + 2 H2O + H(+). Its pathway is cofactor biosynthesis; riboflavin biosynthesis; riboflavin from 2-hydroxy-3-oxobutyl phosphate and 5-amino-6-(D-ribitylamino)uracil: step 1/2. Its function is as follows. Catalyzes the formation of 6,7-dimethyl-8-ribityllumazine by condensation of 5-amino-6-(D-ribitylamino)uracil with 3,4-dihydroxy-2-butanone 4-phosphate. This is the penultimate step in the biosynthesis of riboflavin. This is 6,7-dimethyl-8-ribityllumazine synthase from Pasteurella multocida (strain Pm70).